We begin with the raw amino-acid sequence, 158 residues long: 2-C-methyl-D-erythritol 2,4-cyclodiphosphate synthase (158 aa).

A divalent metal cation is bound by residues D8 and H10. 4-CDP-2-C-methyl-D-erythritol 2-phosphate contacts are provided by residues 8 to 10 (DVH) and 34 to 35 (HS). H42 is an a divalent metal cation binding site. 4-CDP-2-C-methyl-D-erythritol 2-phosphate is bound by residues 56 to 58 (DIG), 61 to 65 (FPDTD), 100 to 106 (AQAPKMA), 132 to 135 (TTSE), F139, and R142.

The protein belongs to the IspF family. In terms of assembly, homotrimer. A divalent metal cation is required as a cofactor.

The catalysed reaction is 4-CDP-2-C-methyl-D-erythritol 2-phosphate = 2-C-methyl-D-erythritol 2,4-cyclic diphosphate + CMP. It functions in the pathway isoprenoid biosynthesis; isopentenyl diphosphate biosynthesis via DXP pathway; isopentenyl diphosphate from 1-deoxy-D-xylulose 5-phosphate: step 4/6. Involved in the biosynthesis of isopentenyl diphosphate (IPP) and dimethylallyl diphosphate (DMAPP), two major building blocks of isoprenoid compounds. Catalyzes the conversion of 4-diphosphocytidyl-2-C-methyl-D-erythritol 2-phosphate (CDP-ME2P) to 2-C-methyl-D-erythritol 2,4-cyclodiphosphate (ME-CPP) with a corresponding release of cytidine 5-monophosphate (CMP). The sequence is that of 2-C-methyl-D-erythritol 2,4-cyclodiphosphate synthase from Aliivibrio fischeri (strain ATCC 700601 / ES114) (Vibrio fischeri).